Reading from the N-terminus, the 576-residue chain is WD repeat-containing protein 26 (576 aa).

Polar residues predominate over residues 1 to 20 (MQSNGTGQEQNHPANTQNGD). The tract at residues 1–46 (MQSNGTGQEQNHPANTQNGDANGLQSNAGSASGASGTGSGSLKKKK) is disordered. The segment covering 21 to 34 (ANGLQSNAGSASGA) has biased composition (low complexity). Phosphoserine is present on Ser49. A LisH domain is found at 51-83 (AEEDVIRLIGQHLHGLGLNQTVDLLMQESGCRL). Residues 84–143 (EHSSATKFRNHVMEGEWDKAENDLNELKALMHSPNAIVRMKFLLLQQKYLEYLEDGKVLE) form the CTLH domain. WD repeat units follow at residues 265 to 304 (EHCNEVWFCKFSNDGTKLATGSKDTTVIIWQVEPDTHQLK), 311 to 350 (GHAYGVSYLAWSPDDVYLIACGPDDCSELWLWNVQTGELR), 356 to 396 (SHED…ESWE), 436 to 475 (QEDHPIMSFTVSKNGRLALLNVATQGVHLWDLQDRVLVRK), 478 to 520 (GVTQ…PIVE), and 523 to 563 (GHTR…DAQE).

Forms homooligomers. Identified in the CTLH complex that contains at least MAEA, RMND5A (or alternatively its paralog RMND5B), GID8, WDR26, and RANBP9 and/or RANBP10. Interacts with DDB1-CUL4A/B E3 ligase complexes.

It is found in the cytoplasm. The protein localises to the nucleus. It localises to the mitochondrion. G-beta-like protein involved in cell signal transduction. Acts as a negative regulator in MAPK signaling pathway. Functions as a scaffolding protein to promote G beta:gamma-mediated PLCB2 plasma membrane translocation and subsequent activation in leukocytes. Core component of the CTLH E3 ubiquitin-protein ligase complex that mediates ubiquitination and subsequent proteasomal degradation of target proteins. Acts as a negative regulator of the canonical Wnt signaling pathway through preventing ubiquitination of beta-catenin CTNNB1 by the beta-catenin destruction complex, thus negatively regulating CTNNB1 degradation. Serves as a scaffold to coordinate PI3K/AKT pathway-driven cell growth and migration. Protects cells from oxidative stress-induced apoptosis via the down-regulation of AP-1 transcriptional activity as well as by inhibiting cytochrome c release from mitochondria. Also protects cells by promoting hypoxia-mediated autophagy and mitophagy. The protein is WD repeat-containing protein 26 (wdr26) of Danio rerio (Zebrafish).